The sequence spans 503 residues: Aspartyl/glutamyl-tRNA(Asn/Gln) amidotransferase subunit B (503 aa).

The protein belongs to the GatB/GatE family. GatB subfamily. Heterotrimer of A, B and C subunits.

The enzyme catalyses L-glutamyl-tRNA(Gln) + L-glutamine + ATP + H2O = L-glutaminyl-tRNA(Gln) + L-glutamate + ADP + phosphate + H(+). The catalysed reaction is L-aspartyl-tRNA(Asn) + L-glutamine + ATP + H2O = L-asparaginyl-tRNA(Asn) + L-glutamate + ADP + phosphate + 2 H(+). In terms of biological role, allows the formation of correctly charged Asn-tRNA(Asn) or Gln-tRNA(Gln) through the transamidation of misacylated Asp-tRNA(Asn) or Glu-tRNA(Gln) in organisms which lack either or both of asparaginyl-tRNA or glutaminyl-tRNA synthetases. The reaction takes place in the presence of glutamine and ATP through an activated phospho-Asp-tRNA(Asn) or phospho-Glu-tRNA(Gln). The polypeptide is Aspartyl/glutamyl-tRNA(Asn/Gln) amidotransferase subunit B (Cereibacter sphaeroides (strain KD131 / KCTC 12085) (Rhodobacter sphaeroides)).